A 1361-amino-acid chain; its full sequence is Rho guanine nucleotide exchange factor 18 (1361 aa).

Disordered stretches follow at residues 33-88 (LQDL…SCSE), 131-156 (SGGG…SRSV), and 244-292 (DGAG…ARER). Positions 50–61 (PDSRPTGEEPGR) are enriched in basic and acidic residues. Polar residues predominate over residues 64 to 73 (LFSSLAGSQD). The span at 74-88 (LSRRRSWERSRSCSE) shows a compositional bias: basic and acidic residues. Basic and acidic residues-rich tracts occupy residues 245-256 (GAGKNEKSDKST) and 271-292 (RQKE…ARER). Residues 310 to 334 (SSCPLCGKPFLSSASLKEHPRGTLL) form a C2H2-type; degenerate zinc finger. The tract at residues 348-368 (TVSQKGGPQPTPSPAGPGTQL) is disordered. The DH domain maps to 447–644 (KRQDVLYELM…KDIISQVDAK (198 aa)). Positions 684–786 (QLHLEGMLCW…WMAHIQRAVE (103 aa)) constitute a PH domain. 4 disordered regions span residues 893–980 (ANGQ…DPRL), 1143–1211 (LKKQ…RLAK), 1229–1264 (AAVQ…SSAS), and 1277–1361 (MGKD…VIFF). Residue Thr912 is modified to Phosphothreonine. Phosphoserine is present on Ser921. Residues 1038 to 1148 (LEQERQRNFE…LLRRLKKQNT (111 aa)) are a coiled coil. Residues 1191–1211 (YAERPEVARRDSAPTENRLAK) show a composition bias toward basic and acidic residues. The segment covering 1254–1264 (RGSQRWESSAS) has biased composition (polar residues). A phosphoserine mark is found at Ser1289 and Ser1291. Composition is skewed to pro residues over residues 1300-1317 (PAPP…PPAD) and 1334-1344 (PGPPAPSPLPA). A compositionally biased stretch (basic and acidic residues) spans 1349–1361 (AKEDASKEDVIFF).

In terms of assembly, interacts with SEPT9; the interaction may inhibit GEF activity. Interacts with Gbetagamma subunits GNB1 and GNG2. Interacts with EPB41L4B. Interacts with PATJ (via C-terminus). Expressed in all tissues tested with highest expression in kidney and pancreas. Weakly or not expressed in liver, skeletal muscle and testis. Isoform 1: Expressed in eosinophils. Isoform 2: Expressed in eosinophils. Isoform 3: Expressed in eosinophils. Isoform 4: Not detected in eosinophils.

The protein localises to the cytoplasm. It is found in the cytoskeleton. The protein resides in the cell membrane. Its subcellular location is the apical cell membrane. In terms of biological role, acts as a guanine nucleotide exchange factor (GEF) for RhoA GTPases. Its activation induces formation of actin stress fibers. Also acts as a GEF for RAC1, inducing production of reactive oxygen species (ROS). Does not act as a GEF for CDC42. The G protein beta-gamma (Gbetagamma) subunits of heterotrimeric G proteins act as activators, explaining the integrated effects of LPA and other G-protein coupled receptor agonists on actin stress fiber formation, cell shape change and ROS production. Required for EPB41L4B-mediated regulation of the circumferential actomyosin belt in epithelial cells. This Homo sapiens (Human) protein is Rho guanine nucleotide exchange factor 18 (ARHGEF18).